The primary structure comprises 271 residues: Formamidopyrimidine-DNA glycosylase (271 aa).

Proline 2 functions as the Schiff-base intermediate with DNA in the catalytic mechanism. The active-site Proton donor is the glutamate 3. Lysine 58 acts as the Proton donor; for beta-elimination activity in catalysis. Positions 92, 111, and 152 each coordinate DNA. The FPG-type zinc-finger motif lies at 237 to 271 (MVYGREGEACRHCGGELKHATIGQRATVWCAACQR). Arginine 261 functions as the Proton donor; for delta-elimination activity in the catalytic mechanism.

It belongs to the FPG family. Monomer. It depends on Zn(2+) as a cofactor.

It catalyses the reaction Hydrolysis of DNA containing ring-opened 7-methylguanine residues, releasing 2,6-diamino-4-hydroxy-5-(N-methyl)formamidopyrimidine.. It carries out the reaction 2'-deoxyribonucleotide-(2'-deoxyribose 5'-phosphate)-2'-deoxyribonucleotide-DNA = a 3'-end 2'-deoxyribonucleotide-(2,3-dehydro-2,3-deoxyribose 5'-phosphate)-DNA + a 5'-end 5'-phospho-2'-deoxyribonucleoside-DNA + H(+). Its function is as follows. Involved in base excision repair of DNA damaged by oxidation or by mutagenic agents. Acts as a DNA glycosylase that recognizes and removes damaged bases. Has a preference for oxidized purines, such as 7,8-dihydro-8-oxoguanine (8-oxoG). Has AP (apurinic/apyrimidinic) lyase activity and introduces nicks in the DNA strand. Cleaves the DNA backbone by beta-delta elimination to generate a single-strand break at the site of the removed base with both 3'- and 5'-phosphates. This Xanthomonas campestris pv. campestris (strain ATCC 33913 / DSM 3586 / NCPPB 528 / LMG 568 / P 25) protein is Formamidopyrimidine-DNA glycosylase.